The following is a 134-amino-acid chain: Small ribosomal subunit protein uS8 (134 aa).

It belongs to the universal ribosomal protein uS8 family. As to quaternary structure, part of the 30S ribosomal subunit. Contacts proteins S5 and S12.

Its function is as follows. One of the primary rRNA binding proteins, it binds directly to 16S rRNA central domain where it helps coordinate assembly of the platform of the 30S subunit. The protein is Small ribosomal subunit protein uS8 of Kosmotoga olearia (strain ATCC BAA-1733 / DSM 21960 / TBF 19.5.1).